Reading from the N-terminus, the 425-residue chain is Histidine--tRNA ligase (425 aa).

It belongs to the class-II aminoacyl-tRNA synthetase family. As to quaternary structure, homodimer.

The protein resides in the cytoplasm. The enzyme catalyses tRNA(His) + L-histidine + ATP = L-histidyl-tRNA(His) + AMP + diphosphate + H(+). This Shewanella sp. (strain MR-4) protein is Histidine--tRNA ligase.